The primary structure comprises 422 residues: Putative acid phosphatase 5 (422 aa).

The N-terminal stretch at 1–13 (MLLLLVLLIGASG) is a signal peptide. The active-site Nucleophile is His-40. Asn-104, Asn-210, and Asn-218 each carry an N-linked (GlcNAc...) asparagine glycan. 3 disulfides stabilise this stretch: Cys-152-Cys-363, Cys-205-Cys-302, and Cys-338-Cys-342. Residue Asp-279 is the Proton donor of the active site. N-linked (GlcNAc...) asparagine glycans are attached at residues Asn-312 and Asn-323.

Belongs to the histidine acid phosphatase family.

The catalysed reaction is a phosphate monoester + H2O = an alcohol + phosphate. In Caenorhabditis elegans, this protein is Putative acid phosphatase 5 (pho-5).